The primary structure comprises 325 residues: Beta-ketoacyl-[acyl-carrier-protein] synthase III (325 aa).

Residues C116 and H252 contribute to the active site. Residues 253–257 are ACP-binding; it reads QANLR. Residue N282 is part of the active site.

This sequence belongs to the thiolase-like superfamily. FabH family. In terms of assembly, homodimer.

Its subcellular location is the cytoplasm. It catalyses the reaction butanoyl-CoA + malonyl-[ACP] + H(+) = 3-oxohexanoyl-[ACP] + CO2 + CoA. It carries out the reaction hexanoyl-CoA + malonyl-[ACP] + H(+) = 3-oxooctanoyl-[ACP] + CO2 + CoA. The enzyme catalyses octanoyl-CoA + malonyl-[ACP] + H(+) = 3-oxodecanoyl-[ACP] + CO2 + CoA. The catalysed reaction is decanoyl-CoA + malonyl-[ACP] + H(+) = 3-oxododecanoyl-[ACP] + CO2 + CoA. It catalyses the reaction 2-methylpropanoyl-CoA + malonyl-[ACP] + H(+) = 4-methyl-3-oxopentanoyl-[ACP] + CO2 + CoA. It carries out the reaction 3-methylbutanoyl-CoA + malonyl-[ACP] + H(+) = 5-methyl-3-oxohexanoyl-[ACP] + CO2 + CoA. The enzyme catalyses malonyl-[ACP] + acetyl-CoA + H(+) = 3-oxobutanoyl-[ACP] + CO2 + CoA. It functions in the pathway lipid metabolism; fatty acid biosynthesis. Functionally, catalyzes the condensation reaction of fatty acid synthesis by the addition to an acyl acceptor of two carbons from malonyl-ACP. Catalyzes the first condensation reaction which initiates fatty acid synthesis and may therefore play a role in governing the total rate of fatty acid production. Possesses both acetoacetyl-ACP synthase and acetyl transacylase activities. Can use a wide range of acyl-CoAs as the primer substrate in vitro, with a slight preference for short, medium-straight chain acyl-CoAs. Can also use branched-chain acyl-CoAs and acetyl-CoA. The polypeptide is Beta-ketoacyl-[acyl-carrier-protein] synthase III (Xanthomonas campestris pv. campestris (strain 8004)).